The following is a 225-amino-acid chain: PKHD-type hydroxylase YbiX (225 aa).

The Fe2OG dioxygenase domain occupies 78 to 177 (TLSTPLFNRY…RVASFMWIQS (100 aa)). Fe cation-binding residues include His-96, Asp-98, and His-158. Arg-168 serves as a coordination point for 2-oxoglutarate.

Requires Fe(2+) as cofactor. L-ascorbate is required as a cofactor.

The polypeptide is PKHD-type hydroxylase YbiX (Escherichia coli O17:K52:H18 (strain UMN026 / ExPEC)).